A 134-amino-acid polypeptide reads, in one-letter code: ATP synthase epsilon chain (134 aa).

The protein belongs to the ATPase epsilon chain family. In terms of assembly, F-type ATPases have 2 components, CF(1) - the catalytic core - and CF(0) - the membrane proton channel. CF(1) has five subunits: alpha(3), beta(3), gamma(1), delta(1), epsilon(1). CF(0) has three main subunits: a, b and c.

The protein resides in the cell membrane. Functionally, produces ATP from ADP in the presence of a proton gradient across the membrane. The sequence is that of ATP synthase epsilon chain from Anoxybacillus flavithermus (strain DSM 21510 / WK1).